Reading from the N-terminus, the 364-residue chain is Tripartite motif-containing protein 54 (364 aa).

The RING-type zinc-finger motif lies at 26–82 (CPICLEMFSKPVVILPCQHNLCRKCANDVFQASNPLWQSRGSTTVSSGGRFRCPSCR). The B box-type zinc finger occupies 121–163 (EQHLMCEEHEDEKINIYCLSCEVPTCSLCKVFGAHKDCEVAPL). Residues Cys-126, His-129, Cys-149, and His-155 each contribute to the Zn(2+) site. The mediates microtubule-binding and homooligomerization stretch occupies residues 168-211 (KRQKSELSDGIAMLVAGNDRVQAVITQMEEVCQTIEDNSRRQKQ). Residues 194-252 (QMEEVCQTIEDNSRRQKQLLNQKFETLCAVLEERKGELLQALARVQEEKLQRVRSLIRQ) are a coiled coil. Positions 271–329 (MEEPQMALYLQQAKELINKVGAMSKVELAGRPEPGYESMEQFSVIVEHVAEMLRTIDFQ) constitute a COS domain. Positions 328-364 (FQPGASGDEEDDEVTLDGEEGNTGLEEERLDGPEGLH) are disordered. Over residues 334 to 347 (GDEEDDEVTLDGEE) the composition is skewed to acidic residues. Positions 353-364 (EEERLDGPEGLH) are enriched in basic and acidic residues.

In terms of assembly, homooligomer and heterooligomer. Interacts with TRIM63 and probably with TRIM55. Interacts with tubulin.

It localises to the cytoplasm. The protein resides in the cytoskeleton. The protein localises to the myofibril. It is found in the sarcomere. Its subcellular location is the z line. In terms of biological role, may bind and stabilize microtubules during myotubes formation. The sequence is that of Tripartite motif-containing protein 54 (Trim54) from Rattus norvegicus (Rat).